Reading from the N-terminus, the 75-residue chain is Protein Tlp homolog (75 aa).

The tract at residues 52-75 (RREALDGMREEIKDEARDKKNGYM) is disordered.

This sequence belongs to the Tlp family.

This is Protein Tlp homolog from Clostridium botulinum (strain Okra / Type B1).